Consider the following 40-residue polypeptide: MITPHNYINNSCTTTITTTTTTTAMNKGGTLFEALVIKKQ.

This is an uncharacterized protein from Dictyostelium discoideum (Social amoeba).